We begin with the raw amino-acid sequence, 179 residues long: Large ribosomal subunit protein uL15 (179 aa).

The protein belongs to the universal ribosomal protein uL15 family. Part of the 50S ribosomal subunit.

Its function is as follows. Binds to the 23S rRNA. The protein is Large ribosomal subunit protein uL15 of Archaeoglobus fulgidus (strain ATCC 49558 / DSM 4304 / JCM 9628 / NBRC 100126 / VC-16).